Consider the following 102-residue polypeptide: MAETSLRIEVVYATPERQWLLACEVPAGTSVSEALRLSGLAEQVPGLDLPGSPVGIFGKVVSEPAVRLVEEGDRLEVYRPLLADPKETRRQRAAKAKAARER.

It belongs to the UPF0125 (RnfH) family.

In Pseudomonas entomophila (strain L48), this protein is Protein RnfH.